The sequence spans 134 residues: UPF0102 protein Rmet_3430 (134 aa).

Belongs to the UPF0102 family.

This Cupriavidus metallidurans (strain ATCC 43123 / DSM 2839 / NBRC 102507 / CH34) (Ralstonia metallidurans) protein is UPF0102 protein Rmet_3430.